We begin with the raw amino-acid sequence, 363 residues long: Putative lipoate-protein ligase A (363 aa).

In terms of domain architecture, BPL/LPL catalytic spans 49 to 229 (STAKHCLLLY…CFLLHKSHST (181 aa)). ATP-binding positions include arginine 91, 96-99 (GTVF), and lysine 152. Lysine 152 contributes to the (R)-lipoate binding site.

It belongs to the LplA family. As to quaternary structure, monomer.

Its subcellular location is the cytoplasm. The enzyme catalyses L-lysyl-[lipoyl-carrier protein] + (R)-lipoate + ATP = N(6)-[(R)-lipoyl]-L-lysyl-[lipoyl-carrier protein] + AMP + diphosphate + H(+). Its pathway is protein modification; protein lipoylation via exogenous pathway; protein N(6)-(lipoyl)lysine from lipoate: step 1/2. The protein operates within protein modification; protein lipoylation via exogenous pathway; protein N(6)-(lipoyl)lysine from lipoate: step 2/2. Its function is as follows. Catalyzes both the ATP-dependent activation of exogenously supplied lipoate to lipoyl-AMP and the transfer of the activated lipoyl onto the lipoyl domains of lipoate-dependent enzymes. The polypeptide is Putative lipoate-protein ligase A (aim22) (Schizosaccharomyces pombe (strain 972 / ATCC 24843) (Fission yeast)).